Consider the following 157-residue polypeptide: Protein Smg homolog (157 aa).

It belongs to the Smg family.

This chain is Protein Smg homolog, found in Xanthomonas euvesicatoria pv. vesicatoria (strain 85-10) (Xanthomonas campestris pv. vesicatoria).